A 305-amino-acid chain; its full sequence is Serine/threonine-protein phosphatase PP1-delta (305 aa).

Residues aspartate 62, histidine 64, aspartate 90, and asparagine 122 each coordinate Mn(2+). The active-site Proton donor is histidine 123. The Mn(2+) site is built by histidine 172 and histidine 247.

This sequence belongs to the PPP phosphatase family. Expressed in male germline including spermatocytes, spermatids and spermatozoa.

It localises to the chromosome. It is found in the cell projection. The protein resides in the pseudopodium. The protein localises to the cytoplasm. The catalysed reaction is O-phospho-L-seryl-[protein] + H2O = L-seryl-[protein] + phosphate. It carries out the reaction O-phospho-L-threonyl-[protein] + H2O = L-threonyl-[protein] + phosphate. Probable phosphatase which plays a redundant role with gsp-4 in spermatogenesis by regulating sister chromatid segregation during meiosis. In addition, involved in sperm motility by controlling the dynamic disassembly of major sperm proteins (MSP) in the spermatozoan pseudopodium. The polypeptide is Serine/threonine-protein phosphatase PP1-delta (Caenorhabditis elegans).